The following is a 387-amino-acid chain: Eukaryotic translation initiation factor 3 subunit M (387 aa).

The region spanning 181-340 is the PCI domain; sequence LSSKVMIELL…RKVHISSTMH (160 aa).

Belongs to the eIF-3 subunit M family. In terms of assembly, component of the eukaryotic translation initiation factor 3 (eIF-3) complex. The eIF-3 complex interacts with pix.

Its subcellular location is the cytoplasm. It is found in the golgi apparatus. In terms of biological role, component of the eukaryotic translation initiation factor 3 (eIF-3) complex, which is involved in protein synthesis of a specialized repertoire of mRNAs and, together with other initiation factors, stimulates binding of mRNA and methionyl-tRNAi to the 40S ribosome. The eIF-3 complex specifically targets and initiates translation of a subset of mRNAs involved in cell proliferation. This chain is Eukaryotic translation initiation factor 3 subunit M, found in Drosophila persimilis (Fruit fly).